We begin with the raw amino-acid sequence, 1542 residues long: ABC multidrug transporter AFR1 (1542 aa).

Disordered regions lie at residues 1 to 84 (MSAA…LPAD) and 118 to 141 (SQQS…FSRK). The span at 18-41 (TATTQNPSGLANSQVTSDPVPSAT) shows a compositional bias: polar residues. The segment covering 60–69 (DKSVDAEKVE) has biased composition (basic and acidic residues). 2 N-linked (GlcNAc...) asparagine glycosylation sites follow: Asn207 and Asn397. The 253-residue stretch at 221–473 (LKVLGIFGVN…MIGLGYRDLP (253 aa)) folds into the ABC transporter 1 domain. 5 consecutive transmembrane segments (helical) span residues 584-604 (FGIS…GSVY), 618-638 (GGLL…ELPS), 669-689 (VPYN…MGGL), 694-714 (GAFF…SAFF), and 726-746 (VAAR…GYMI). Asn822 is a glycosylation site (N-linked (GlcNAc...) asparagine). Residues 844-864 (FGILVGFFAFFMFLQMMFIEY) traverse the membrane as a helical segment. An ABC transporter 2 domain is found at 917–1159 (FTWEGLNYTV…VLIDYLERNG (243 aa)). Residue Asn923 is glycosylated (N-linked (GlcNAc...) asparagine). 953–960 (GASGAGKT) contacts ATP. The next 6 membrane-spanning stretches (helical) occupy residues 1253 to 1273 (WTRL…FLQL), 1284 to 1304 (VFAI…IEPQ), 1335 to 1355 (MPYS…GVGF), 1365 to 1385 (FFLM…AVAA), 1390 to 1410 (ILIA…FCGV), and 1516 to 1536 (FGIF…AARF).

Belongs to the ABC transporter superfamily. ABCG family. PDR (TC 3.A.1.205) subfamily.

The protein localises to the cell membrane. The catalysed reaction is itraconazole(in) + ATP + H2O = itraconazole(out) + ADP + phosphate + H(+). It carries out the reaction voriconazole(in) + ATP + H2O = voriconazole(out) + ADP + phosphate + H(+). The enzyme catalyses fluconazole(in) + ATP + H2O = fluconazole(out) + ADP + phosphate + H(+). Its function is as follows. Major pleiotropic ABC efflux transporter that confers resistance to structurally and functionally unrelated compounds including azoles such as fluconazole (FLC), itraconazole (ITC), posaconazole (POS), and voriconazole (VRC). Is also able to efflux the eukaryote protein synthesis inhibitor cycloheximide (CHX). This Cryptococcus deuterogattii (strain R265) (Cryptococcus gattii VGII (strain R265)) protein is ABC multidrug transporter AFR1.